A 360-amino-acid chain; its full sequence is MLVWLGEFLQQYYSGFNVISYITVRAILALLTALLVSLWIGPKVIRRLQLLKFGQEVRHDGPESHFSKRGTPTMGGVMILFAITVSTLLWANLANPYVWFSLFVLLGYGAIGFVDDYRKITRKNTDGLIARWKYFWLSVIALVAAFGMYAIGKDTDATRLVVPFFKEIMPQLGLFYIILTYFVIVGTSNAVNLTDGLDGLAIMPTVLVAGAFALIAWATGNVNFAEYLHIPYIKFSAELVVFCTAIVGAGLGFLWFNTYPAQVFMGDVGSLALGGALGVVAVLVRQEFLLVIMGGVFVVETLSVILQVGSYKLRKQRIFRMAPIHHHFELKGWPEPRVIVRFWIISLMLVLVGLVTLKLR.

Helical transmembrane passes span Tyr21–Gly41, Thr73–Leu93, Ala94–Val114, Trp132–Gly152, Ile168–Ser188, Gly199–Thr219, Phe235–Trp255, Val263–Leu283, Phe288–Val308, and Val338–Lys358.

This sequence belongs to the glycosyltransferase 4 family. MraY subfamily. It depends on Mg(2+) as a cofactor.

The protein resides in the cell inner membrane. It catalyses the reaction UDP-N-acetyl-alpha-D-muramoyl-L-alanyl-gamma-D-glutamyl-meso-2,6-diaminopimeloyl-D-alanyl-D-alanine + di-trans,octa-cis-undecaprenyl phosphate = di-trans,octa-cis-undecaprenyl diphospho-N-acetyl-alpha-D-muramoyl-L-alanyl-D-glutamyl-meso-2,6-diaminopimeloyl-D-alanyl-D-alanine + UMP. The protein operates within cell wall biogenesis; peptidoglycan biosynthesis. Its function is as follows. Catalyzes the initial step of the lipid cycle reactions in the biosynthesis of the cell wall peptidoglycan: transfers peptidoglycan precursor phospho-MurNAc-pentapeptide from UDP-MurNAc-pentapeptide onto the lipid carrier undecaprenyl phosphate, yielding undecaprenyl-pyrophosphoryl-MurNAc-pentapeptide, known as lipid I. The sequence is that of Phospho-N-acetylmuramoyl-pentapeptide-transferase from Pasteurella multocida (strain Pm70).